Here is a 247-residue protein sequence, read N- to C-terminus: Probable phosphatase swp_1620 (247 aa).

The Zn(2+) site is built by His8, His10, His16, His41, Glu74, His102, His132, Asp193, and His195.

It belongs to the PHP family. Requires Zn(2+) as cofactor.

The polypeptide is Probable phosphatase swp_1620 (Shewanella piezotolerans (strain WP3 / JCM 13877)).